A 188-amino-acid polypeptide reads, in one-letter code: Threonylcarbamoyl-AMP synthase (188 aa).

The 186-residue stretch at 3-188 folds into the YrdC-like domain; sequence QLHPSDIKDI…RSGKILRNGQ (186 aa).

The protein belongs to the SUA5 family. TsaC subfamily.

Its subcellular location is the cytoplasm. It carries out the reaction L-threonine + hydrogencarbonate + ATP = L-threonylcarbamoyladenylate + diphosphate + H2O. Its function is as follows. Required for the formation of a threonylcarbamoyl group on adenosine at position 37 (t(6)A37) in tRNAs that read codons beginning with adenine. Catalyzes the conversion of L-threonine, HCO(3)(-)/CO(2) and ATP to give threonylcarbamoyl-AMP (TC-AMP) as the acyladenylate intermediate, with the release of diphosphate. This chain is Threonylcarbamoyl-AMP synthase, found in Shewanella putrefaciens (strain CN-32 / ATCC BAA-453).